Reading from the N-terminus, the 118-residue chain is Large ribosomal subunit protein bL19 (118 aa).

It belongs to the bacterial ribosomal protein bL19 family.

This protein is located at the 30S-50S ribosomal subunit interface and may play a role in the structure and function of the aminoacyl-tRNA binding site. The sequence is that of Large ribosomal subunit protein bL19 from Alcanivorax borkumensis (strain ATCC 700651 / DSM 11573 / NCIMB 13689 / SK2).